Here is a 240-residue protein sequence, read N- to C-terminus: UDP-2,3-diacylglucosamine hydrolase (240 aa).

Mn(2+)-binding residues include Asp-7, His-9, Asp-40, Asn-78, and His-113. 78–79 is a binding site for substrate; it reads NR. Substrate contacts are provided by Asp-121, Ser-159, Lys-166, and His-194. Residues His-194 and His-196 each contribute to the Mn(2+) site.

It belongs to the LpxH family. Requires Mn(2+) as cofactor.

Its subcellular location is the cell inner membrane. It carries out the reaction UDP-2-N,3-O-bis[(3R)-3-hydroxytetradecanoyl]-alpha-D-glucosamine + H2O = 2-N,3-O-bis[(3R)-3-hydroxytetradecanoyl]-alpha-D-glucosaminyl 1-phosphate + UMP + 2 H(+). It functions in the pathway glycolipid biosynthesis; lipid IV(A) biosynthesis; lipid IV(A) from (3R)-3-hydroxytetradecanoyl-[acyl-carrier-protein] and UDP-N-acetyl-alpha-D-glucosamine: step 4/6. Its function is as follows. Hydrolyzes the pyrophosphate bond of UDP-2,3-diacylglucosamine to yield 2,3-diacylglucosamine 1-phosphate (lipid X) and UMP by catalyzing the attack of water at the alpha-P atom. Involved in the biosynthesis of lipid A, a phosphorylated glycolipid that anchors the lipopolysaccharide to the outer membrane of the cell. This is UDP-2,3-diacylglucosamine hydrolase from Pseudomonas putida (strain ATCC 700007 / DSM 6899 / JCM 31910 / BCRC 17059 / LMG 24140 / F1).